Consider the following 391-residue polypeptide: Arginine biosynthesis bifunctional protein ArgJ 2 (391 aa).

Substrate-binding residues include lysine 167 and serine 180. The active-site Nucleophile is the serine 180.

The protein belongs to the ArgJ family. Heterotetramer of two alpha and two beta chains.

It localises to the cytoplasm. It catalyses the reaction N(2)-acetyl-L-ornithine + L-glutamate = N-acetyl-L-glutamate + L-ornithine. The enzyme catalyses L-glutamate + acetyl-CoA = N-acetyl-L-glutamate + CoA + H(+). Its pathway is amino-acid biosynthesis; L-arginine biosynthesis; L-ornithine and N-acetyl-L-glutamate from L-glutamate and N(2)-acetyl-L-ornithine (cyclic): step 1/1. The protein operates within amino-acid biosynthesis; L-arginine biosynthesis; N(2)-acetyl-L-ornithine from L-glutamate: step 1/4. In terms of biological role, catalyzes two activities which are involved in the cyclic version of arginine biosynthesis: the synthesis of N-acetylglutamate from glutamate and acetyl-CoA as the acetyl donor, and of ornithine by transacetylation between N(2)-acetylornithine and glutamate. The polypeptide is Arginine biosynthesis bifunctional protein ArgJ 2 (Streptomyces clavuligerus).